A 154-amino-acid chain; its full sequence is Aspartate carbamoyltransferase regulatory chain (154 aa).

Residues Cys-109, Cys-114, Cys-138, and Cys-141 each coordinate Zn(2+).

The protein belongs to the PyrI family. Contains catalytic and regulatory chains. Requires Zn(2+) as cofactor.

Functionally, involved in allosteric regulation of aspartate carbamoyltransferase. The protein is Aspartate carbamoyltransferase regulatory chain of Sodalis glossinidius (strain morsitans).